Here is a 128-residue protein sequence, read N- to C-terminus: Histone H2A.2 (128 aa).

It belongs to the histone H2A family. The nucleosome is a histone octamer containing two molecules each of H2A, H2B, H3 and H4 assembled in one H3-H4 heterotetramer and two H2A-H2B heterodimers. The octamer wraps approximately 147 bp of DNA. In terms of tissue distribution, expressed in the generative cell within the bicellular pollen. Not detected in other reproductive or vegetative tissues.

The protein localises to the nucleus. Its subcellular location is the chromosome. Core component of nucleosome. Nucleosomes wrap and compact DNA into chromatin, limiting DNA accessibility to the cellular machineries which require DNA as a template. Histones thereby play a central role in transcription regulation, DNA repair, DNA replication and chromosomal stability. DNA accessibility is regulated via a complex set of post-translational modifications of histones, also called histone code, and nucleosome remodeling. May be involved in the repression of gene expression in male gametes. This Lilium longiflorum (Trumpet lily) protein is Histone H2A.2 (gH2A).